The chain runs to 706 residues: Coiled-coil domain-containing protein 177 (706 aa).

The span at Met-1–Glu-11 shows a compositional bias: acidic residues. Disordered regions lie at residues Met-1–Arg-63, Ala-179–Leu-262, and Ala-268–Gly-287. Low complexity-rich tracts occupy residues Pro-28–Pro-49 and Ala-179–Ser-209. The segment covering Pro-210–Ala-221 has biased composition (pro residues). Positions Ala-242 to Glu-257 are enriched in low complexity. Residue Ser-310 is modified to Phosphoserine. Residues Ala-360 to Gln-624 are a coiled coil. 4 disordered regions span residues Gln-364–Ala-386, Val-398–Glu-425, Asp-448–His-580, and Glu-651–Lys-706. The segment covering Gln-368–Ala-386 has biased composition (basic and acidic residues). 3 stretches are compositionally biased toward basic and acidic residues: residues Asp-448 to Leu-529, Gln-548 to His-580, and Glu-651 to Ala-663. Residues Leu-664–Ser-674 are compositionally biased toward low complexity. The span at His-676 to Lys-706 shows a compositional bias: basic and acidic residues.

The chain is Coiled-coil domain-containing protein 177 (Ccdc177) from Mus musculus (Mouse).